A 185-amino-acid chain; its full sequence is ATP synthase subunit delta (185 aa).

It belongs to the ATPase delta chain family. As to quaternary structure, F-type ATPases have 2 components, F(1) - the catalytic core - and F(0) - the membrane proton channel. F(1) has five subunits: alpha(3), beta(3), gamma(1), delta(1), epsilon(1). F(0) has three main subunits: a(1), b(2) and c(10-14). The alpha and beta chains form an alternating ring which encloses part of the gamma chain. F(1) is attached to F(0) by a central stalk formed by the gamma and epsilon chains, while a peripheral stalk is formed by the delta and b chains.

The protein resides in the cell inner membrane. Its function is as follows. F(1)F(0) ATP synthase produces ATP from ADP in the presence of a proton or sodium gradient. F-type ATPases consist of two structural domains, F(1) containing the extramembraneous catalytic core and F(0) containing the membrane proton channel, linked together by a central stalk and a peripheral stalk. During catalysis, ATP synthesis in the catalytic domain of F(1) is coupled via a rotary mechanism of the central stalk subunits to proton translocation. Functionally, this protein is part of the stalk that links CF(0) to CF(1). It either transmits conformational changes from CF(0) to CF(1) or is implicated in proton conduction. The polypeptide is ATP synthase subunit delta (Phocaeicola vulgatus (strain ATCC 8482 / DSM 1447 / JCM 5826 / CCUG 4940 / NBRC 14291 / NCTC 11154) (Bacteroides vulgatus)).